Consider the following 300-residue polypeptide: 4-hydroxy-tetrahydrodipicolinate synthase (300 aa).

Residue threonine 55 participates in pyruvate binding. The active-site Proton donor/acceptor is the tyrosine 143. Lysine 171 acts as the Schiff-base intermediate with substrate in catalysis. Residue isoleucine 211 participates in pyruvate binding.

The protein belongs to the DapA family. Homotetramer; dimer of dimers.

The protein localises to the cytoplasm. It catalyses the reaction L-aspartate 4-semialdehyde + pyruvate = (2S,4S)-4-hydroxy-2,3,4,5-tetrahydrodipicolinate + H2O + H(+). The protein operates within amino-acid biosynthesis; L-lysine biosynthesis via DAP pathway; (S)-tetrahydrodipicolinate from L-aspartate: step 3/4. Its function is as follows. Catalyzes the condensation of (S)-aspartate-beta-semialdehyde [(S)-ASA] and pyruvate to 4-hydroxy-tetrahydrodipicolinate (HTPA). The protein is 4-hydroxy-tetrahydrodipicolinate synthase of Mycolicibacterium paratuberculosis (strain ATCC BAA-968 / K-10) (Mycobacterium paratuberculosis).